The following is a 61-amino-acid chain: Large ribosomal subunit protein uL30 (61 aa).

This sequence belongs to the universal ribosomal protein uL30 family. As to quaternary structure, part of the 50S ribosomal subunit.

The protein is Large ribosomal subunit protein uL30 of Shewanella halifaxensis (strain HAW-EB4).